The chain runs to 197 residues: Small ribosomal subunit protein uS11m (197 aa).

Basic and acidic residues predominate over residues 43 to 52 (AAKEEVEKAE). Positions 43–66 (AAKEEVEKAETPAPAPSRSSFSIY) are disordered.

The protein belongs to the universal ribosomal protein uS11 family. Component of the mitochondrial ribosome small subunit (28S) which comprises a 12S rRNA and about 30 distinct proteins.

The protein resides in the mitochondrion. In Bos taurus (Bovine), this protein is Small ribosomal subunit protein uS11m (MRPS11).